Reading from the N-terminus, the 185-residue chain is MDAFSLKKDNRKKFQDKQKLKRKHATPSDRKYRLLNRQKEEKATTEEKDQDQEQPALKSNEDRYYEDPVLEDPHSAVANAELNKVLKDVLKNRLQQNDDATAVNNVANKDTLKIKDLKQMNTDELNRWLGRQNTTSAITAAEPESLVVPIHVQGDHDRAGKKISAPSTDLPEELETDQDFLDGLL.

Position 1 is an N-acetylmethionine (methionine 1). 3 stretches are compositionally biased toward basic and acidic residues: residues 1-18 (MDAF…QDKQ), 26-47 (TPSD…TTEE), and 59-71 (SNED…PVLE). Disordered stretches follow at residues 1–71 (MDAF…PVLE) and 155–185 (DHDR…DGLL). Over residues 170-185 (LPEELETDQDFLDGLL) the composition is skewed to acidic residues.

This is an uncharacterized protein from Saccharomyces cerevisiae (strain ATCC 204508 / S288c) (Baker's yeast).